The sequence spans 302 residues: MTNISLDKLVTESRNENTKDIDRVETLEMLKMINDEDKKVAEAVEKELIHIAKAVDKIGESFLNGGRLIYVGAGTSGRLGVLDASECPPTYGVSYDLVRGIIAGGESAMFKAREGAEDSKKLCIKDLKNINFGKNDILVGIAASGRTPYVIGGLEYANGIGATTISVTCNPESEMSKIANISIAPVVGPEAITGSTRMKAGTAQKMVLNMLSTGAMVKTGKVYGNLMVDLKATNEKLVERAKRIVMQATGSKREQVEKILKETNFDVKLSIFMIESSLDKIKAKEILDKNKGYIVEAIKEIS.

Residues 58-221 enclose the SIS domain; it reads IGESFLNGGR…STGAMVKTGK (164 aa). Catalysis depends on E86, which acts as the Proton donor. E117 is an active-site residue.

It belongs to the GCKR-like family. MurNAc-6-P etherase subfamily. In terms of assembly, homodimer.

It catalyses the reaction N-acetyl-D-muramate 6-phosphate + H2O = N-acetyl-D-glucosamine 6-phosphate + (R)-lactate. Its pathway is amino-sugar metabolism; N-acetylmuramate degradation. Its function is as follows. Specifically catalyzes the cleavage of the D-lactyl ether substituent of MurNAc 6-phosphate, producing GlcNAc 6-phosphate and D-lactate. This is N-acetylmuramic acid 6-phosphate etherase from Clostridium botulinum (strain Langeland / NCTC 10281 / Type F).